Reading from the N-terminus, the 127-residue chain is Large-conductance mechanosensitive channel (127 aa).

2 helical membrane-spanning segments follow: residues 14–34 and 69–89; these read VLDL…VKSL and GAFL…FLIV.

Belongs to the MscL family. Homopentamer.

Its subcellular location is the cell membrane. Functionally, channel that opens in response to stretch forces in the membrane lipid bilayer. May participate in the regulation of osmotic pressure changes within the cell. This Leuconostoc mesenteroides subsp. mesenteroides (strain ATCC 8293 / DSM 20343 / BCRC 11652 / CCM 1803 / JCM 6124 / NCDO 523 / NBRC 100496 / NCIMB 8023 / NCTC 12954 / NRRL B-1118 / 37Y) protein is Large-conductance mechanosensitive channel.